Reading from the N-terminus, the 459-residue chain is Alcohol acyl transferase 1 allele RGc (459 aa).

Catalysis depends on proton acceptor residues histidine 164 and asparagine 385.

It belongs to the plant acyltransferase family. Expressed at very low levels in the skin of ripe fruit.

In terms of biological role, involved in the biosynthesis of volatile esters which confer ripe apple fruit flavor. Alcohol acyl transferase that can use a wide range of alcohols as substrate to produce esters. This Malus domestica (Apple) protein is Alcohol acyl transferase 1 allele RGc.